Here is a 408-residue protein sequence, read N- to C-terminus: Peptidase T (408 aa).

His78 contributes to the Zn(2+) binding site. The active site involves Asp80. Asp140 lines the Zn(2+) pocket. Glu173 (proton acceptor) is an active-site residue. Zn(2+)-binding residues include Glu174, Asp196, and His379.

This sequence belongs to the peptidase M20B family. Zn(2+) serves as cofactor.

The protein resides in the cytoplasm. The catalysed reaction is Release of the N-terminal residue from a tripeptide.. In terms of biological role, cleaves the N-terminal amino acid of tripeptides. This is Peptidase T from Escherichia coli O6:K15:H31 (strain 536 / UPEC).